A 1247-amino-acid polypeptide reads, in one-letter code: Probable phosphorylase b kinase regulatory subunit alpha (1247 aa).

Residues 853 to 883 (LKGLYEKACQQKLWGLVRHTAGMLGKRVEDL) form a calmodulin-binding region. Residues Ser1030 and Ser1033 each carry the phosphoserine modification. The calmodulin-binding stretch occupies residues 1052-1089 (DRQGQWLRRRRLDGALNRVPRDFYSRVWTVLEKCQGLA). A lipid anchor (S-farnesyl cysteine) is attached at Cys1244.

It belongs to the phosphorylase b kinase regulatory chain family. Although the final Cys may be farnesylated, the terminal tripeptide is probably not removed, and the C-terminus is not methylated.

It localises to the cell membrane. Its pathway is glycan biosynthesis; glycogen metabolism. Its function is as follows. Phosphorylase b kinase catalyzes the phosphorylation of serine in certain substrates, including troponin I. The alpha chain may bind calmodulin. The sequence is that of Probable phosphorylase b kinase regulatory subunit alpha from Drosophila melanogaster (Fruit fly).